The sequence spans 512 residues: ADP,ATP carrier protein 4 (512 aa).

11 consecutive transmembrane segments (helical) span residues 34 to 54, 71 to 91, 102 to 122, 157 to 177, 192 to 212, 231 to 251, 296 to 316, 330 to 350, 361 to 381, 390 to 410, and 476 to 496; these read ISKFLFITLLMFCILFIQNLI, ISFLKFWGVMPSAFLITVIYV, IFYLIISIFLTFFALFAYVIF, FSLFYIIAELWPNVVFALLFW, FYPLFGLLSQTGIYLAGHFLE, FHTLSIQIILTIVLILGIVSI, LIATLLICYGIAINLVEGPWK, AAFIGSYLSYTGVFTIFFVLL, FTSAVITPSIVFITGILFFAV, LIIANFILTDPALVAITIGAI, and SISICLMIIFILTCVTWIWAT.

This sequence belongs to the ADP/ATP translocase tlc family.

The protein resides in the cell membrane. In terms of biological role, provides the rickettsial cell with host ATP in exchange for rickettsial ADP. This is an obligate exchange system. This energy acquiring activity is an important component of rickettsial parasitism. The polypeptide is ADP,ATP carrier protein 4 (tlcD) (Rickettsia prowazekii (strain Madrid E)).